A 422-amino-acid chain; its full sequence is Enolase 2 (422 aa).

Q162 contacts (2R)-2-phosphoglycerate. The active-site Proton donor is the E204. Residues D241, E285, and D312 each coordinate Mg(2+). 4 residues coordinate (2R)-2-phosphoglycerate: K337, R366, S367, and K388. The active-site Proton acceptor is K337.

Belongs to the enolase family. It depends on Mg(2+) as a cofactor.

The protein localises to the cytoplasm. It localises to the secreted. It is found in the cell surface. The enzyme catalyses (2R)-2-phosphoglycerate = phosphoenolpyruvate + H2O. It participates in carbohydrate degradation; glycolysis; pyruvate from D-glyceraldehyde 3-phosphate: step 4/5. Its function is as follows. Catalyzes the reversible conversion of 2-phosphoglycerate (2-PG) into phosphoenolpyruvate (PEP). It is essential for the degradation of carbohydrates via glycolysis. This is Enolase 2 from Lactococcus lactis subsp. lactis (strain IL1403) (Streptococcus lactis).